The primary structure comprises 124 residues: Small ribosomal subunit protein uS12 (124 aa).

Residue Asp89 is modified to 3-methylthioaspartic acid. Residues 105–124 (AGVKDRKKGRSKYGAKRPKA) form a disordered region. Over residues 109–124 (DRKKGRSKYGAKRPKA) the composition is skewed to basic residues.

It belongs to the universal ribosomal protein uS12 family. Part of the 30S ribosomal subunit. Contacts proteins S8 and S17. May interact with IF1 in the 30S initiation complex.

Its function is as follows. With S4 and S5 plays an important role in translational accuracy. Interacts with and stabilizes bases of the 16S rRNA that are involved in tRNA selection in the A site and with the mRNA backbone. Located at the interface of the 30S and 50S subunits, it traverses the body of the 30S subunit contacting proteins on the other side and probably holding the rRNA structure together. The combined cluster of proteins S8, S12 and S17 appears to hold together the shoulder and platform of the 30S subunit. In Dichelobacter nodosus (strain VCS1703A), this protein is Small ribosomal subunit protein uS12.